The sequence spans 285 residues: Protease HtpX homolog (285 aa).

2 consecutive transmembrane segments (helical) span residues 7–27 (TAML…MIGG) and 30–50 (GMTI…WFSD). Histidine 131 contacts Zn(2+). Glutamate 132 is an active-site residue. Histidine 135 contributes to the Zn(2+) binding site. 2 helical membrane-spanning segments follow: residues 141-161 (ILIS…ANFA) and 177-197 (IAGI…QMAI). Position 202 (glutamate 202) interacts with Zn(2+).

The protein belongs to the peptidase M48B family. The cofactor is Zn(2+).

The protein localises to the cell inner membrane. In Paraburkholderia phytofirmans (strain DSM 17436 / LMG 22146 / PsJN) (Burkholderia phytofirmans), this protein is Protease HtpX homolog.